The sequence spans 196 residues: Ribonuclease HII (196 aa).

The RNase H type-2 domain occupies 15 to 196 (FILAGIDEAG…RLSFTKALYK (182 aa)). The a divalent metal cation site is built by Asp21, Glu22, and Asp112.

It belongs to the RNase HII family. It depends on Mn(2+) as a cofactor. The cofactor is Mg(2+).

The protein localises to the cytoplasm. It catalyses the reaction Endonucleolytic cleavage to 5'-phosphomonoester.. In terms of biological role, endonuclease that specifically degrades the RNA of RNA-DNA hybrids. In Rickettsia bellii (strain OSU 85-389), this protein is Ribonuclease HII.